The sequence spans 417 residues: MTGYFSFPFPRRTSVGVDVGGVAVGGGAPVVVQSMTNTDTADIDQTVAQVAALHRAGSEIVRITVDRDESAAAVPRIHERLQRLGINVPLVGDFHYIGHKLLADHPACAEALAKYRINPGNVGFKDKKDRQFTDIVEMAIKHDKPVRIGVNWGSLDQELLTRLMDDNQDKGFPLTAQEVTREAIVQSAILSAEMAEEIGLGRDKIILSAKVSGVQDLIAVYTELATRSDHALHLGLTEAGMGSKGIVASSAAMGILLQQGIGDTIRISLTPEPNGDRTREVQVAQELLQTMGFRQFVPIVAACPGCGRTTSTVFQELAQNIQADLRKNMPVWREKYPGVENLKVAVMGCIVNGPGESKHADIGISLPGTGETPTAPVFVDGKKAATLRGTSIAADFEKMVTDYIEQRFGRGGKAAAE.

The [4Fe-4S] cluster site is built by Cys303, Cys306, Cys349, and Glu356.

This sequence belongs to the IspG family. Requires [4Fe-4S] cluster as cofactor.

The enzyme catalyses (2E)-4-hydroxy-3-methylbut-2-enyl diphosphate + oxidized [flavodoxin] + H2O + 2 H(+) = 2-C-methyl-D-erythritol 2,4-cyclic diphosphate + reduced [flavodoxin]. Its pathway is isoprenoid biosynthesis; isopentenyl diphosphate biosynthesis via DXP pathway; isopentenyl diphosphate from 1-deoxy-D-xylulose 5-phosphate: step 5/6. In terms of biological role, converts 2C-methyl-D-erythritol 2,4-cyclodiphosphate (ME-2,4cPP) into 1-hydroxy-2-methyl-2-(E)-butenyl 4-diphosphate. The sequence is that of 4-hydroxy-3-methylbut-2-en-1-yl diphosphate synthase (flavodoxin) from Mesorhizobium japonicum (strain LMG 29417 / CECT 9101 / MAFF 303099) (Mesorhizobium loti (strain MAFF 303099)).